A 462-amino-acid polypeptide reads, in one-letter code: Probable serine/threonine-protein kinase DDB_G0286841 (462 aa).

Residues 64 to 358 (FNFLKVISKG…VDEVKCHPFF (295 aa)) form the Protein kinase domain. Residues 70–78 (ISKGGFGKV) and Lys-93 contribute to the ATP site. Asp-188 (proton acceptor) is an active-site residue. In terms of domain architecture, AGC-kinase C-terminal spans 359–462 (SEINWKIYED…LFIDFDFPTY (104 aa)). The segment covering 414–439 (NIYKNNNNNNNNNNNNNNNNNNNNNN) has biased composition (low complexity). The interval 414–447 (NIYKNNNNNNNNNNNNNNNNNNNNNNDDNDDENN) is disordered.

This sequence belongs to the protein kinase superfamily. AGC Ser/Thr protein kinase family.

The catalysed reaction is L-seryl-[protein] + ATP = O-phospho-L-seryl-[protein] + ADP + H(+). It catalyses the reaction L-threonyl-[protein] + ATP = O-phospho-L-threonyl-[protein] + ADP + H(+). This chain is Probable serine/threonine-protein kinase DDB_G0286841, found in Dictyostelium discoideum (Social amoeba).